The chain runs to 96 residues: MKKTFTGVVVSDKADKTVSVKVERRFAHPLYGKVVTRSHKYAAHDENNEYKIGDRVEIIAVRPISKTKTWKVTKLIERPRGIETTLAETEVAGGEA.

The protein belongs to the universal ribosomal protein uS17 family. Part of the 30S ribosomal subunit.

In terms of biological role, one of the primary rRNA binding proteins, it binds specifically to the 5'-end of 16S ribosomal RNA. The sequence is that of Small ribosomal subunit protein uS17 from Deinococcus radiodurans (strain ATCC 13939 / DSM 20539 / JCM 16871 / CCUG 27074 / LMG 4051 / NBRC 15346 / NCIMB 9279 / VKM B-1422 / R1).